Consider the following 532-residue polypeptide: MGKRVAIIGAGVSGLASIRSCLEEGLEPTCFERSEDIGGLWKFSEHAEEGRASIYQSVFTNSSKEMMCFPDFPYPDDFPNFMHNSKLQEYITVFSKEKNLLKYIQFKTLVCSVNKRPDFSVSGQWDITTERDGKRESATFDAVLICSGHHVYPNLPEESFPGLKLFKGKCFHSREYKEPGIFKGKRVLVIGLGNSGCDIATELSHTAEQVIISSRSGSWVMSRVWDDGYPWDMMFITRFETFLKNSLPTIISDWWYMKQMNARFKHENYGLMPLNGTLRKEPVFNDELPACILCGTVSIKPNVKAFTETSAIFEDGTVFEAIDCVIFATGYNYAYPFLDESIIKSKNNEITLFKGIFPPKLEKPTMAVIGFVQSLGATIPTTDLQARWAVQVIKGTCTLPSVTDMMNDIDKKREGKLKWFGTSETVQTDYISYMDELASFIGAKPNIPWLFLTDPKLAVEVFFGPCSPYQFRLVGPGKWPGARNAILTQWDRTLKPMKTRAVGNPQKPCMLCHLVKLFVLPVLFIAVFLALI.

Residues 9-13 (GAGVS), E32, 40-41 (LW), and 61-62 (NS) each bind FAD. Residues 60 to 61 (TN) and 195 to 198 (SGCD) each bind NADP(+). A Phosphoserine modification is found at S401. The chain crosses the membrane as a helical span at residues 512–532 (CHLVKLFVLPVLFIAVFLALI).

It belongs to the FMO family. It depends on FAD as a cofactor.

The protein resides in the microsome membrane. The protein localises to the endoplasmic reticulum membrane. The catalysed reaction is trimethylamine + NADPH + O2 = trimethylamine N-oxide + NADP(+) + H2O. It catalyses the reaction N,N-dimethylaniline + NADPH + O2 + H(+) = N,N-dimethylaniline N-oxide + NADP(+) + H2O. The enzyme catalyses hypotaurine + NADPH + O2 + H(+) = taurine + NADP(+) + H2O. It carries out the reaction (S)-nicotine + NADPH + O2 = trans-(S)-nicotine N(1')-oxide + NADP(+) + H2O. The catalysed reaction is albendazole + NADPH + O2 + H(+) = albendazole S-oxide + NADP(+) + H2O. Its function is as follows. Essential hepatic enzyme that catalyzes the oxygenation of a wide variety of nitrogen- and sulfur-containing compounds including drugs as well as dietary compounds. Plays an important role in the metabolism of trimethylamine (TMA), via the production of trimethylamine N-oxide (TMAO) metabolite. TMA is generated by the action of gut microbiota using dietary precursors such as choline, choline containing compounds, betaine or L-carnitine. By regulating TMAO concentration, FMO3 directly impacts both platelet responsiveness and rate of thrombus formation. This is Flavin-containing monooxygenase 3 (FMO3) from Canis lupus familiaris (Dog).